Consider the following 144-residue polypeptide: 3-dehydroquinate dehydratase (144 aa).

Y22 serves as the catalytic Proton acceptor. Positions 73, 79, and 86 each coordinate substrate. Catalysis depends on H99, which acts as the Proton donor. Substrate is bound by residues 100–101 (LS) and R110.

Belongs to the type-II 3-dehydroquinase family. In terms of assembly, homododecamer.

The enzyme catalyses 3-dehydroquinate = 3-dehydroshikimate + H2O. Its pathway is metabolic intermediate biosynthesis; chorismate biosynthesis; chorismate from D-erythrose 4-phosphate and phosphoenolpyruvate: step 3/7. Functionally, catalyzes a trans-dehydration via an enolate intermediate. This Pelotomaculum thermopropionicum (strain DSM 13744 / JCM 10971 / SI) protein is 3-dehydroquinate dehydratase.